The primary structure comprises 146 residues: Large ribosomal subunit protein uL15 (146 aa).

Residues 1–18 (MKLHELKAAEGTRKERNR) are compositionally biased toward basic and acidic residues. Residues 1-58 (MKLHELKAAEGTRKERNRVGRGMSSGNGKTSGRGHKGQKARSGGGVRPGFEGGQMPLF) form a disordered region. Residues 42-52 (SGGGVRPGFEG) are compositionally biased toward gly residues.

The protein belongs to the universal ribosomal protein uL15 family. Part of the 50S ribosomal subunit.

In terms of biological role, binds to the 23S rRNA. This is Large ribosomal subunit protein uL15 from Oceanobacillus iheyensis (strain DSM 14371 / CIP 107618 / JCM 11309 / KCTC 3954 / HTE831).